The following is an 801-amino-acid chain: U-box domain-containing protein 44 (801 aa).

Residues 22 to 101 (HIYEAFICPL…EEWRSRNDAA (80 aa)) enclose the U-box domain. ARM repeat units follow at residues 134–173 (RSNR…VVVE), 176–215 (DESK…ELSK), 218–259 (ALCE…NMER), 261–300 (EEIV…ELPL), 301–340 (NNDV…KISS), 342–386 (EGSA…NIVN), 390–429 (DFDK…GLTS), 435–475 (PKVV…NLSP), and 480–521 (ELAK…ELPD).

In terms of assembly, interacts with AAO3. Binds to SD129. In terms of tissue distribution, expressed in leaves, root vasculature and guard cells.

The catalysed reaction is S-ubiquitinyl-[E2 ubiquitin-conjugating enzyme]-L-cysteine + [acceptor protein]-L-lysine = [E2 ubiquitin-conjugating enzyme]-L-cysteine + N(6)-ubiquitinyl-[acceptor protein]-L-lysine.. It participates in protein modification; protein ubiquitination. Functionally, functions as an E3 ubiquitin-protein ligase. Prevents premature senescence probably by targeting proteins involved in this process for degradation. Promotes the degradation of AAO3 and thus represses abscisic acid (ABA) biosynthesis. This Arabidopsis thaliana (Mouse-ear cress) protein is U-box domain-containing protein 44 (PUB44).